A 316-amino-acid polypeptide reads, in one-letter code: UDP-N-acetylenolpyruvoylglucosamine reductase (316 aa).

Residues 30–194 (VGGEADYLVF…LSVKFALAPG (165 aa)) form the FAD-binding PCMH-type domain. R173 is an active-site residue. S223 functions as the Proton donor in the catalytic mechanism. Residue E293 is part of the active site.

It belongs to the MurB family. FAD serves as cofactor.

It is found in the cytoplasm. It catalyses the reaction UDP-N-acetyl-alpha-D-muramate + NADP(+) = UDP-N-acetyl-3-O-(1-carboxyvinyl)-alpha-D-glucosamine + NADPH + H(+). The protein operates within cell wall biogenesis; peptidoglycan biosynthesis. Cell wall formation. This is UDP-N-acetylenolpyruvoylglucosamine reductase from Streptococcus pneumoniae serotype 19F (strain G54).